The chain runs to 246 residues: Polyhedrin (246 aa).

This sequence belongs to the polyhedrin family.

Major component of the virus occlusion bodies, which are large proteinaceous structures (polyhedra), that protect the virus from the outside environment for extended periods until they are ingested by insect larvae. In Lepidoptera (butterflies and moths), this protein is Polyhedrin (PH).